Reading from the N-terminus, the 582-residue chain is Vesicular glutamate transporter 2 (582 aa).

Residues 1–71 (MESVKQRILT…CTCFGLPRRY (71 aa)) lie on the Cytoplasmic side of the membrane. A helical transmembrane segment spans residues 72-92 (IIAIMSGLGFCISFGIRCNLG). The Vesicular segment spans residues 93-125 (VAIVDMVNNSTIHRGGKVIKEKAKFNWDPETVG). 2 N-linked (GlcNAc...) asparagine glycosylation sites follow: Asn-100 and Asn-101. Residues 126 to 146 (MIHGSFFWGYIITQIPGGYIA) form a helical membrane-spanning segment. Over 147-148 (SR) the chain is Cytoplasmic. The helical transmembrane segment at 149–169 (LAANRVFGAAILLTSTLNMLI) threads the bilayer. Residues 170 to 177 (PSAARVHY) are Vesicular-facing. Residues 178-198 (GCVIFVRILQGLVEGVTYPAC) form a helical membrane-spanning segment. The Cytoplasmic segment spans residues 199-216 (HGIWSKWAPPLERSRLAT). The chain crosses the membrane as a helical span at residues 217–237 (TSFCGSYAGAVIAMPLAGILV). Topologically, residues 238-244 (QYTGWSS) are vesicular. Residues 245–265 (VFYVYGSFGMIWYMFWLLVSY) traverse the membrane as a helical segment. Residues 266-310 (ESPAKHPTITDEERRYIEESIGESANLLGAMEKFKTPWRKFFTSM) are Cytoplasmic-facing. The helical transmembrane segment at 311–331 (PVYAIIVANFCRSWTFYLLLI) threads the bilayer. At 332-349 (SQPAYFEEVFGFEISKVG) the chain is on the vesicular side. The helical transmembrane segment at 350–370 (MLSAVPHLVMTIIVPIGGQIA) threads the bilayer. The Cytoplasmic segment spans residues 371 to 386 (DFLRSKQILSTTTVRK). A helical membrane pass occupies residues 387–407 (IMNCGGFGMEATLLLVVGYSH). The Vesicular segment spans residues 408–409 (TR). A helical membrane pass occupies residues 410–430 (GVAISFLVLAVGFSGFAISGF). Residues 431-443 (NVNHLDIAPRYAS) lie on the Cytoplasmic side of the membrane. A helical transmembrane segment spans residues 444–464 (ILMGISNGVGTLSGMVCPIIV). The Vesicular portion of the chain corresponds to 465 to 477 (GAMTKNKSREEWQ). The N-linked (GlcNAc...) asparagine glycan is linked to Asn-470. Residues 478–498 (YVFLIAALVHYGGVIFYAIFA) form a helical membrane-spanning segment. Topologically, residues 499-582 (SGEKQPWADP…YNYKDRDDYS (84 aa)) are cytoplasmic.

It belongs to the major facilitator superfamily. Sodium/anion cotransporter family. VGLUT subfamily.

It is found in the cytoplasmic vesicle. The protein localises to the secretory vesicle. The protein resides in the synaptic vesicle membrane. Its subcellular location is the synapse. It localises to the synaptosome. It is found in the cell membrane. The catalysed reaction is L-glutamate(out) = L-glutamate(in). It carries out the reaction 3 Na(+)(out) + phosphate(out) = 3 Na(+)(in) + phosphate(in). The enzyme catalyses phosphate(in) = phosphate(out). It catalyses the reaction K(+)(in) + H(+)(out) = K(+)(out) + H(+)(in). The catalysed reaction is chloride(in) = chloride(out). Its activity is regulated as follows. Chloride channel activity is allosterically activated by lumenal H(+) and Cl(-) leading to synaptic vesicles acidification. The L-glutamate transport activity is allosterically activated by lumenal H(+) and Cl(-). The allosteric requirement for H(+) efficiently prevents non-vesicular efflux across the plasma membrane. The L-glutamate uniporter activity exhibits a biphasic dependence on chloride concentration. In terms of biological role, multifunctional transporter that transports L-glutamate as well as multiple ions such as chloride, proton, potassium, sodium and phosphate. At the synaptic vesicle membrane, mainly functions as a uniporter which transports preferentially L-glutamate but also, phosphate from the cytoplasm into synaptic vesicles at presynaptic nerve terminals of excitatory neural cells. The L-glutamate or phosphate uniporter activity is electrogenic and is driven by the proton electrochemical gradient, mainly by the electrical gradient established by the vacuolar H(+)-ATPase across the synaptic vesicle membrane. In addition, functions as a chloride channel that allows a chloride permeation through the synaptic vesicle membrane therefore affects the proton electrochemical gradient and promotes synaptic vesicles acidification. Moreover, functions as a vesicular K(+)/H(+) antiport allowing to maintain the electrical gradient and to decrease chemical gradient and therefore sustain vesicular L-glutamate uptake. The vesicular H(+)/H(+) antiport activity is electroneutral. At the plasma membrane, following exocytosis, functions as a symporter of Na(+) and phosphate from the extracellular space to the cytoplasm allowing synaptic phosphate homeostasis regulation. The symporter activity is driven by an inside negative membrane potential and is electrogenic. Also involved in the regulation of retinal hyaloid vessel regression during postnatal development. May also play a role in the endocrine L-glutamatergic system of other tissues such as pineal gland and pancreas. In Bos taurus (Bovine), this protein is Vesicular glutamate transporter 2.